Reading from the N-terminus, the 351-residue chain is Heat-inducible transcription repressor HrcA (351 aa).

It belongs to the HrcA family.

Negative regulator of class I heat shock genes (grpE-dnaK-dnaJ and groELS operons). Prevents heat-shock induction of these operons. The protein is Heat-inducible transcription repressor HrcA of Acetivibrio thermocellus (strain ATCC 27405 / DSM 1237 / JCM 9322 / NBRC 103400 / NCIMB 10682 / NRRL B-4536 / VPI 7372) (Clostridium thermocellum).